Consider the following 242-residue polypeptide: Glucosamine-6-phosphate deaminase (242 aa).

The active-site Proton acceptor; for enolization step is Asp-67. Asn-136 serves as the catalytic For ring-opening step. Residue His-138 is the Proton acceptor; for ring-opening step of the active site. The active-site For ring-opening step is Glu-143.

The protein belongs to the glucosamine/galactosamine-6-phosphate isomerase family. NagB subfamily.

It catalyses the reaction alpha-D-glucosamine 6-phosphate + H2O = beta-D-fructose 6-phosphate + NH4(+). It participates in amino-sugar metabolism; N-acetylneuraminate degradation; D-fructose 6-phosphate from N-acetylneuraminate: step 5/5. Its function is as follows. Catalyzes the reversible isomerization-deamination of glucosamine 6-phosphate (GlcN6P) to form fructose 6-phosphate (Fru6P) and ammonium ion. The protein is Glucosamine-6-phosphate deaminase of Clostridium perfringens (strain ATCC 13124 / DSM 756 / JCM 1290 / NCIMB 6125 / NCTC 8237 / Type A).